Consider the following 224-residue polypeptide: Pyridoxal 5'-phosphate synthase subunit SNO1 (224 aa).

67-69 (GES) contacts L-glutamine. Cys100 (nucleophile) is an active-site residue. L-glutamine is bound by residues Arg129 and 160-161 (IR). Residues His203 and Glu205 each act as charge relay system in the active site.

It belongs to the glutaminase PdxT/SNO family.

The enzyme catalyses aldehydo-D-ribose 5-phosphate + D-glyceraldehyde 3-phosphate + L-glutamine = pyridoxal 5'-phosphate + L-glutamate + phosphate + 3 H2O + H(+). It carries out the reaction L-glutamine + H2O = L-glutamate + NH4(+). It participates in cofactor biosynthesis; pyridoxal 5'-phosphate biosynthesis. Its function is as follows. Catalyzes the hydrolysis of glutamine to glutamate and ammonia as part of the biosynthesis of pyridoxal 5'-phosphate. The resulting ammonia molecule is channeled to the active site of a SNZ isoform. The chain is Pyridoxal 5'-phosphate synthase subunit SNO1 (SNO1) from Saccharomyces cerevisiae (strain ATCC 204508 / S288c) (Baker's yeast).